The following is a 142-amino-acid chain: Large ribosomal subunit protein mL42 (142 aa).

A mitochondrion-targeting transit peptide spans Met1–His32.

It belongs to the mitochondrion-specific ribosomal protein mL42 family. Component of the mitochondrial ribosome large subunit (39S) which comprises a 16S rRNA and about 50 distinct proteins. Component of the mitochondrial ribosome small subunit (28S) which comprises a 12S rRNA and about 30 distinct proteins.

The protein localises to the mitochondrion. This chain is Large ribosomal subunit protein mL42 (MRPL42), found in Bos taurus (Bovine).